We begin with the raw amino-acid sequence, 262 residues long: uncharacterized protein (262 aa).

The next 3 helical transmembrane spans lie at 4–24 (LIVFLSMLSSSVAGFFGRFLG), 28–48 (VSRFNLIIFLILLVFSICLFR), and 62–82 (CYLALVCQISLFLVLLRSHIL). Positions 152 to 181 (EREARAQEHDRISAEVETITSACENLEAAM) form a coiled coil.

The protein localises to the mitochondrion membrane. This is an uncharacterized protein from Arabidopsis thaliana (Mouse-ear cress).